The following is a 312-amino-acid chain: Type II methyltransferase M.NgoMIV (312 aa).

Residues Phe-3–Glu-311 form the SAM-dependent MTase C5-type domain. Residue Cys-74 is part of the active site.

This sequence belongs to the class I-like SAM-binding methyltransferase superfamily. C5-methyltransferase family.

The catalysed reaction is a 2'-deoxycytidine in DNA + S-adenosyl-L-methionine = a 5-methyl-2'-deoxycytidine in DNA + S-adenosyl-L-homocysteine + H(+). In terms of biological role, a methylase, recognizes the double-stranded sequence 5'-GCCGGC-3', methylates C-2 on both strands, and protects the DNA from cleavage by the NgoMIV endonuclease. In Neisseria gonorrhoeae, this protein is Type II methyltransferase M.NgoMIV (ngoMIVM).